A 341-amino-acid polypeptide reads, in one-letter code: tRNA N6-adenosine threonylcarbamoyltransferase (341 aa).

His-115 and His-119 together coordinate Fe cation. Substrate-binding positions include 137–141 (AVSGG), Asp-170, Gly-183, Asp-187, and Asn-276. Asp-306 contributes to the Fe cation binding site.

The protein belongs to the KAE1 / TsaD family. It depends on Fe(2+) as a cofactor.

It is found in the cytoplasm. It carries out the reaction L-threonylcarbamoyladenylate + adenosine(37) in tRNA = N(6)-L-threonylcarbamoyladenosine(37) in tRNA + AMP + H(+). Functionally, required for the formation of a threonylcarbamoyl group on adenosine at position 37 (t(6)A37) in tRNAs that read codons beginning with adenine. Is involved in the transfer of the threonylcarbamoyl moiety of threonylcarbamoyl-AMP (TC-AMP) to the N6 group of A37, together with TsaE and TsaB. TsaD likely plays a direct catalytic role in this reaction. The chain is tRNA N6-adenosine threonylcarbamoyltransferase from Lacticaseibacillus casei (strain BL23) (Lactobacillus casei).